The following is a 200-amino-acid chain: Ribonuclease T2 (200 aa).

An intrachain disulfide couples cysteine 17 to cysteine 22. Histidine 32 is an active-site residue. Residues cysteine 42 and cysteine 89 are joined by a disulfide bond. Asparagine 43 and asparagine 73 each carry an N-linked (GlcNAc...) asparagine glycan. Residues glutamate 82 and histidine 86 contribute to the active site. N-linked (GlcNAc...) asparagine glycosylation occurs at asparagine 116. 2 disulfides stabilise this stretch: cysteine 152–cysteine 188 and cysteine 170–cysteine 180.

It belongs to the RNase T2 family.

It localises to the secreted. The protein resides in the lysosome lumen. It is found in the endoplasmic reticulum lumen. Its subcellular location is the mitochondrion intermembrane space. The enzyme catalyses a ribonucleotidyl-ribonucleotide-RNA + H2O = a 3'-end 3'-phospho-ribonucleotide-RNA + a 5'-end dephospho-ribonucleoside-RNA + H(+). It catalyses the reaction an adenylyl-uridine-RNA = a 3'-end 2',3'-cyclophospho-AMP-RNA + a 5'-end dephospho-uridine-RNA. It carries out the reaction a guanylyl-uridine-RNA = a 3'-end 2',3'-cyclophospho-GMP-RNA + a 5'-end dephospho-uridine-RNA. Its activity is regulated as follows. Inhibited by Zn(2+) and Cu(2+). In terms of biological role, ribonuclease that plays an essential role in innate immune response by recognizing and degrading RNAs from microbial pathogens that are subsequently sensed by TLR8. Cleaves preferentially single-stranded RNA molecules between purine and uridine residues, which critically contributes to the supply of catabolic uridine and the generation of purine-2',3'-cyclophosphate-terminated oligoribonucleotides. In turn, RNase T2 degradation products promote the RNA-dependent activation of TLR8. In plasmacytoid dendritic cells, it cooperates with PLD3 or PLD4 5'-&gt;3' exonucleases to process RNA fragments and release 2',3'-cyclic guanosine monophosphate (2',3'-cGMP), a potent stimulatory ligand for TLR7. Also plays a key role in degradation of mitochondrial RNA and processing of non-coding RNA imported from the cytosol into mitochondria. Participates as well in degradation of mitochondrion-associated cytosolic rRNAs. In Sus scrofa (Pig), this protein is Ribonuclease T2 (RNASET2).